We begin with the raw amino-acid sequence, 314 residues long: Mitochondrial thiamine pyrophosphate carrier 1 (314 aa).

The next 6 membrane-spanning stretches (helical) occupy residues 14–30 (VAAWKTLLAGAVSGLLA), 84–100 (LLYVTYGSAQFSSYSLF), 116–136 (LVVGAFAGITSSIVSYPFDVL), 170–186 (GSIASMTTITLTASIMF), 217–233 (SAGTIGGVIAKIITFPL), and 285–302 (GILVALSKTIPTTFVSFW). 3 Solcar repeats span residues 14–103 (VAAW…FNRY), 110–195 (EARL…IRIY), and 210–310 (ELAT…AIHY).

Belongs to the mitochondrial carrier (TC 2.A.29) family.

The protein resides in the mitochondrion inner membrane. Mitochondrial transporter that mediates uptake of thiamine pyrophosphate (ThPP) into mitochondria. In Saccharomyces cerevisiae (strain ATCC 204508 / S288c) (Baker's yeast), this protein is Mitochondrial thiamine pyrophosphate carrier 1 (TPC1).